The sequence spans 89 residues: Small ribosomal subunit protein uS15 (89 aa).

Belongs to the universal ribosomal protein uS15 family. As to quaternary structure, part of the 30S ribosomal subunit. Forms a bridge to the 50S subunit in the 70S ribosome, contacting the 23S rRNA.

In terms of biological role, one of the primary rRNA binding proteins, it binds directly to 16S rRNA where it helps nucleate assembly of the platform of the 30S subunit by binding and bridging several RNA helices of the 16S rRNA. Functionally, forms an intersubunit bridge (bridge B4) with the 23S rRNA of the 50S subunit in the ribosome. In Chloroherpeton thalassium (strain ATCC 35110 / GB-78), this protein is Small ribosomal subunit protein uS15.